We begin with the raw amino-acid sequence, 342 residues long: Mitochondrial fission factor (342 aa).

Topologically, residues Met1–Met322 are cytoplasmic. Thr115 is subject to Phosphothreonine. Ala146 is subject to Phosphoserine. Arg149 carries the post-translational modification Phosphothreonine. Residues Lys151, Ser155, Ser157, and Ser172 each carry the phosphoserine modification. Thr200 carries the phosphothreonine modification. Residues Ser202, Ser229, Ser233, and Ser295 each carry the phosphoserine modification. Positions Val291 to Met322 form a coiled coil. The chain crosses the membrane as a helical; Anchor for type IV membrane protein span at residues Val323–Phe340. The Mitochondrial intermembrane portion of the chain corresponds to Arg341–Arg342.

This sequence belongs to the Tango11 family. As to quaternary structure, homodimer. Interacts with DNM1L. Interacts with C11orf65/MFI; the interaction inhibits MFF interaction with DNM1L. Highly expressed in heart, kidney, liver, brain, muscle, and stomach.

It is found in the mitochondrion outer membrane. Its subcellular location is the peroxisome. The protein localises to the cytoplasmic vesicle. It localises to the secretory vesicle. The protein resides in the synaptic vesicle. In terms of biological role, plays a role in mitochondrial and peroxisomal fission. Promotes the recruitment and association of the fission mediator dynamin-related protein 1 (DNM1L) to the mitochondrial surface. May be involved in regulation of synaptic vesicle membrane dynamics by recruitment of DNM1L to clathrin-containing vesicles. This is Mitochondrial fission factor (MFF) from Homo sapiens (Human).